Here is a 366-residue protein sequence, read N- to C-terminus: uncharacterized protein (366 aa).

Helical transmembrane passes span 30-50, 66-86, 136-156, 162-182, 198-218, and 225-245; these read FWTY…AVGI, IIIA…IIVI, IFIS…GYLA, IILF…LDLL, IGVV…IYDI, and YIPE…IIDV.

It localises to the cell membrane. This is an uncharacterized protein from Methanocaldococcus jannaschii (strain ATCC 43067 / DSM 2661 / JAL-1 / JCM 10045 / NBRC 100440) (Methanococcus jannaschii).